The chain runs to 361 residues: D-alanine--D-alanine ligase (361 aa).

The 205-residue stretch at 149–353 folds into the ATP-grasp domain; it reads KKLMAAEGLP…YEELLDVLVQ (205 aa). Residue 176 to 231 coordinates ATP; it reads KKLLGLPVFVKPARGGSSIGISKVSRWEDLPAAVDLARQHDEKVIVESEIVGPEVE. Residues D308, E320, and N322 each coordinate Mg(2+).

It belongs to the D-alanine--D-alanine ligase family. It depends on Mg(2+) as a cofactor. Mn(2+) serves as cofactor.

The protein localises to the cytoplasm. The enzyme catalyses 2 D-alanine + ATP = D-alanyl-D-alanine + ADP + phosphate + H(+). Its pathway is cell wall biogenesis; peptidoglycan biosynthesis. Cell wall formation. This Corynebacterium efficiens (strain DSM 44549 / YS-314 / AJ 12310 / JCM 11189 / NBRC 100395) protein is D-alanine--D-alanine ligase.